We begin with the raw amino-acid sequence, 723 residues long: ATP-dependent DNA helicase RRM3 (723 aa).

2 disordered regions span residues 1-31 (MFRS…SGSH) and 61-101 (DLES…DDDP). A Phosphoserine modification is found at Ser-64. The segment covering 83 to 96 (NNSSSLFSQSQGSF) has biased composition (low complexity). Residue 254 to 261 (GSAGTGKS) participates in ATP binding. A DNA-binding region spans residues 682 to 701 (QVYVALSRAVTMDTLQVLNF).

The protein belongs to the helicase family. In terms of assembly, interacts with DEF1 and POL30.

The protein localises to the nucleus. Its subcellular location is the chromosome. It is found in the telomere. It carries out the reaction Couples ATP hydrolysis with the unwinding of duplex DNA at the replication fork by translocating in the 5'-3' direction. This creates two antiparallel DNA single strands (ssDNA). The leading ssDNA polymer is the template for DNA polymerase III holoenzyme which synthesizes a continuous strand.. The enzyme catalyses ATP + H2O = ADP + phosphate + H(+). Its function is as follows. 5' to 3' DNA replicative helicase recruited to paused replisomes to promote fork progression throughout nonhistone protein-DNA complexes, naturally occurring impediments that are encountered in each S phase where replication forks pauses. Needed for normal fork progression through over 1000 discrete sites scattered throughout the genome, like rDNA, tRNA genes, centromeres, active replication origins, or transcriptional silencers. Required for timely replication of the telomere and subtelomeric DNA and for wild-type levels of telomeric silencing. Involved in regulation of Ty1 transposition and protects the genome from instability at nascent sites of retrotransposition. Involved in DNA repair during stalled replication fork, regulation of fragile sites expression and essential for genome stability. Also plays a role in mtDNA replication. Has G-quadruplex (G4) unwinding activity and can suppress G4-induced genome instability when PIF1 levels are low. The sequence is that of ATP-dependent DNA helicase RRM3 from Saccharomyces cerevisiae (strain ATCC 204508 / S288c) (Baker's yeast).